The sequence spans 274 residues: Karrikin insensitive 2 receptor IA (274 aa).

Catalysis depends on serine 95, which acts as the Nucleophile. Catalysis depends on residues aspartate 217 and histidine 246.

This sequence belongs to the AB hydrolase superfamily. As to quaternary structure, interacts with MAX2A and MAX2B in the presence of (-)-germacrene D, thus forming an E3 SCF ubiquitin ligase complex (ASK-cullin-F-box) containing MAX2A or MAX2B and KAI2IA recognizing SMAX1A; this leads to the subsequent degradation of the transcriptional corepressor SMAX1A, thus triggering the activation of a downstream signaling cascade. In terms of tissue distribution, strongly expressed in stigma.

Its subcellular location is the nucleus. The protein localises to the cytoplasm. With respect to regulation, hydrolysis activity toward yoshimulactone green (YLG), a fluorescent agonist to strigolactone receptor, is inhibited by (-)-germacrene D and GR24, a synthetic strigolactone analog. Functionally, hydrolase involved in the olfaction of sesquiterpene volatile organic compounds (VOCs) during volatile plant communication in a MAX2 proteins-dependent manner. Acts as a karrikin-insensitive receptor that stereospecifically perceives and binds to (-)-germacrene D, particularly in stigmas, and triggers a signaling cascade influencing plant fitness, as the result of reproductive organ growth-promoting effect; this process involves an interaction with MAX2 proteins (e.g. MAX2A and MAX2B) and the subsequent degradation of SMAX1a, a transcriptional corepressor. This Petunia hybrida (Petunia) protein is Karrikin insensitive 2 receptor IA.